The following is a 511-amino-acid chain: Coiled-coil domain-containing protein 125 (511 aa).

Polar residues predominate over residues 1–12 (MSKVARSSSESD). The interval 1-110 (MSKVARSSSE…TVDSNSELSN (110 aa)) is disordered. A compositionally biased stretch (basic and acidic residues) spans 43-54 (EFSHRSRKRSDG). Over residues 83–108 (QDTFPQVSRISNYRRQSSTVDSNSEL) the composition is skewed to polar residues. 2 coiled-coil regions span residues 105–243 (NSEL…LEAL) and 293–325 (RMAASTRKLLLQLKQELEILQKSKEEAYVMADA). Ser504 carries the phosphoserine modification.

It localises to the cytoplasm. In terms of biological role, may be involved in the regulation of cell migration. The polypeptide is Coiled-coil domain-containing protein 125 (CCDC125) (Homo sapiens (Human)).